Consider the following 216-residue polypeptide: Protein Syd (216 aa).

This sequence belongs to the Syd family.

Its subcellular location is the cell inner membrane. Functionally, interacts with the SecY protein in vivo. May bind preferentially to an uncomplexed state of SecY, thus functioning either as a chelating agent for excess SecY in the cell or as a regulatory factor that negatively controls the translocase function. In Shewanella baltica (strain OS223), this protein is Protein Syd.